We begin with the raw amino-acid sequence, 129 residues long: Cytochrome c' (129 aa).

Heme c contacts are provided by arginine 12, glutamine 13, threonine 69, glutamate 70, cysteine 119, cysteine 122, and histidine 123.

In terms of processing, binds 1 heme c group covalently per subunit.

In terms of biological role, cytochrome c' is the most widely occurring bacterial c-type cytochrome. Cytochromes c' are high-spin proteins and the heme has no sixth ligand. Their exact function is not known. The polypeptide is Cytochrome c' (Rubrivivax gelatinosus (Rhodocyclus gelatinosus)).